Consider the following 73-residue polypeptide: Translation initiation factor IF-1 (73 aa).

Residues 1–73 form the S1-like domain; sequence MPKKDGAIEI…SRGRIVYRYK (73 aa).

Belongs to the IF-1 family. In terms of assembly, component of the 30S ribosomal translation pre-initiation complex which assembles on the 30S ribosome in the order IF-2 and IF-3, IF-1 and N-formylmethionyl-tRNA(fMet); mRNA recruitment can occur at any time during PIC assembly.

Its subcellular location is the cytoplasm. Its function is as follows. One of the essential components for the initiation of protein synthesis. Stabilizes the binding of IF-2 and IF-3 on the 30S subunit to which N-formylmethionyl-tRNA(fMet) subsequently binds. Helps modulate mRNA selection, yielding the 30S pre-initiation complex (PIC). Upon addition of the 50S ribosomal subunit IF-1, IF-2 and IF-3 are released leaving the mature 70S translation initiation complex. The sequence is that of Translation initiation factor IF-1 from Frankia alni (strain DSM 45986 / CECT 9034 / ACN14a).